We begin with the raw amino-acid sequence, 344 residues long: Phenylalanine--tRNA ligase alpha subunit (344 aa).

Glutamate 256 contributes to the Mg(2+) binding site.

This sequence belongs to the class-II aminoacyl-tRNA synthetase family. Phe-tRNA synthetase alpha subunit type 1 subfamily. In terms of assembly, tetramer of two alpha and two beta subunits. It depends on Mg(2+) as a cofactor.

The protein localises to the cytoplasm. The catalysed reaction is tRNA(Phe) + L-phenylalanine + ATP = L-phenylalanyl-tRNA(Phe) + AMP + diphosphate + H(+). This Onion yellows phytoplasma (strain OY-M) protein is Phenylalanine--tRNA ligase alpha subunit.